Here is a 98-residue protein sequence, read N- to C-terminus: NADH-ubiquinone oxidoreductase chain 4L (98 aa).

A run of 3 helical transmembrane segments spans residues 2–22 (PSIS…MLVF), 29–49 (SLLC…LFIM), and 61–81 (ILLL…LVMV).

The protein belongs to the complex I subunit 4L family. In terms of assembly, core subunit of respiratory chain NADH dehydrogenase (Complex I) which is composed of 45 different subunits.

The protein localises to the mitochondrion inner membrane. The enzyme catalyses a ubiquinone + NADH + 5 H(+)(in) = a ubiquinol + NAD(+) + 4 H(+)(out). Its function is as follows. Core subunit of the mitochondrial membrane respiratory chain NADH dehydrogenase (Complex I) which catalyzes electron transfer from NADH through the respiratory chain, using ubiquinone as an electron acceptor. Part of the enzyme membrane arm which is embedded in the lipid bilayer and involved in proton translocation. This chain is NADH-ubiquinone oxidoreductase chain 4L (MT-ND4L), found in Lepilemur sahamalazensis (Sahamalaza sportive lemur).